A 519-amino-acid chain; its full sequence is AAA-ATPase At4g30250 (519 aa).

Residues 1–24 form the signal peptide; that stretch reads MSDYWTTMASLLGMLAFCQTIVQL. Residue 252–259 participates in ATP binding; it reads GPPGTGKS. Disordered regions lie at residues 315 to 335 and 467 to 519; these read GKNK…NGSG and KSVG…EKEK. The segment covering 479–488 has biased composition (acidic residues); the sequence is QEEEEEAEEE. Over residues 489–508 the composition is skewed to basic and acidic residues; the sequence is QEKRALDSPNRRNREVCGFR. A compositionally biased stretch (acidic residues) spans 509–519; the sequence is EEEEEEDEKEK.

The protein belongs to the AAA ATPase family. BCS1 subfamily. Mg(2+) serves as cofactor.

The enzyme catalyses ATP + H2O = ADP + phosphate + H(+). This Arabidopsis thaliana (Mouse-ear cress) protein is AAA-ATPase At4g30250.